A 510-amino-acid chain; its full sequence is MTNDPGSGFAAVWNAVVAELNGEPNTDGDAGTGTTLTSPLTPQQRAWLNLVQPLTIVEGFALLSVPSSFVQNEIERHLRTPITAALSRRLGQQIQLGVRIAPPPADDDDDSVAAAVEDPGLEASPETSQEVSDEIDDFGENAPNSRQSWPTHFKKRSTDADTSASAGGTSLNRRYTFDTFVIGASNRFAHAATLAIAEAPARAYNPLFIWGESGLGKTHLLHAAGNYAQRLFPGMRVKYVSTEEFTNDFINSLRDDRKVAFKRSYRDVDVLLVDDIQFIEGKEGIQEEFFHTFNTLHNANKQIVISSDRPPKQLATLEDRLRTRFEWGLITDVQPPELETRIAILRKKAQMERLAVPDDVLELIASSIERNIRELEGALIRVTAFASLNKTPIDKALAEIVLRDLIADAGTMQISAATIMAATAEYFDTTVEELRGPGKTRALAQSRQIAMYLCRELTDLSLPKIGQAFGRDHTTVMYAQRKILSEMAERREVFDHVKELTTRIRQRSKR.

Positions 1-107 are domain I, interacts with DnaA modulators; it reads MTNDPGSGFA…VRIAPPPADD (107 aa). The domain II stretch occupies residues 107–169; that stretch reads DDDDSVAAAV…ADTSASAGGT (63 aa). Positions 119–168 are disordered; it reads PGLEASPETSQEVSDEIDDFGENAPNSRQSWPTHFKKRSTDADTSASAGG. The segment at 170 to 386 is domain III, AAA+ region; sequence SLNRRYTFDT…GALIRVTAFA (217 aa). ATP-binding residues include Gly214, Gly216, Lys217, and Thr218. A domain IV, binds dsDNA region spans residues 387–510; sequence SLNKTPIDKA…TTRIRQRSKR (124 aa).

It belongs to the DnaA family. As to quaternary structure, oligomerizes as a right-handed, spiral filament on DNA at oriC.

The protein localises to the cytoplasm. Functionally, plays an essential role in the initiation and regulation of chromosomal replication. ATP-DnaA binds to the origin of replication (oriC) to initiate formation of the DNA replication initiation complex once per cell cycle. Binds the DnaA box (a 9 base pair repeat at the origin) and separates the double-stranded (ds)DNA. Forms a right-handed helical filament on oriC DNA; dsDNA binds to the exterior of the filament while single-stranded (ss)DNA is stabiized in the filament's interior. The ATP-DnaA-oriC complex binds and stabilizes one strand of the AT-rich DNA unwinding element (DUE), permitting loading of DNA polymerase. After initiation quickly degrades to an ADP-DnaA complex that is not apt for DNA replication. Binds acidic phospholipids. The protein is Chromosomal replication initiator protein DnaA of Mycobacterium marinum (strain ATCC BAA-535 / M).